Reading from the N-terminus, the 250-residue chain is ATP synthase subunit a (250 aa).

Helical transmembrane passes span 26–46, 84–104, 114–134, 143–163, 193–213, and 216–236; these read FTNA…FLYF, FFPL…LGMF, IIVT…YGFY, VFVP…IEII, FVAS…LPLI, and VALT…FAVL.

This sequence belongs to the ATPase A chain family. F-type ATPases have 2 components, CF(1) - the catalytic core - and CF(0) - the membrane proton channel. CF(1) has five subunits: alpha(3), beta(3), gamma(1), delta(1), epsilon(1). CF(0) has three main subunits: a(1), b(2) and c(9-12). The alpha and beta chains form an alternating ring which encloses part of the gamma chain. CF(1) is attached to CF(0) by a central stalk formed by the gamma and epsilon chains, while a peripheral stalk is formed by the delta and b chains.

It localises to the cell inner membrane. Its function is as follows. Key component of the proton channel; it plays a direct role in the translocation of protons across the membrane. This is ATP synthase subunit a from Rhizobium etli (strain ATCC 51251 / DSM 11541 / JCM 21823 / NBRC 15573 / CFN 42).